The following is a 206-amino-acid chain: Ion-translocating oxidoreductase complex subunit G (206 aa).

A helical membrane pass occupies residues 9–29 (GITLALFAAGSTGLTAVINQM). Residue Thr-174 is modified to FMN phosphoryl threonine.

It belongs to the RnfG family. In terms of assembly, the complex is composed of six subunits: RsxA, RsxB, RsxC, RsxD, RsxE and RsxG. Requires FMN as cofactor.

Its subcellular location is the cell inner membrane. Part of a membrane-bound complex that couples electron transfer with translocation of ions across the membrane. Required to maintain the reduced state of SoxR. This is Ion-translocating oxidoreductase complex subunit G from Salmonella typhi.